The chain runs to 173 residues: 3-hydroxydecanoyl-[acyl-carrier-protein] dehydratase (173 aa).

Residue His71 is part of the active site.

This sequence belongs to the thioester dehydratase family. FabA subfamily. In terms of assembly, homodimer.

It is found in the cytoplasm. The enzyme catalyses a (3R)-hydroxyacyl-[ACP] = a (2E)-enoyl-[ACP] + H2O. It catalyses the reaction (3R)-hydroxydecanoyl-[ACP] = (2E)-decenoyl-[ACP] + H2O. It carries out the reaction (2E)-decenoyl-[ACP] = (3Z)-decenoyl-[ACP]. It functions in the pathway lipid metabolism; fatty acid biosynthesis. In terms of biological role, necessary for the introduction of cis unsaturation into fatty acids. Catalyzes the dehydration of (3R)-3-hydroxydecanoyl-ACP to E-(2)-decenoyl-ACP and then its isomerization to Z-(3)-decenoyl-ACP. Can catalyze the dehydratase reaction for beta-hydroxyacyl-ACPs with saturated chain lengths up to 16:0, being most active on intermediate chain length. The polypeptide is 3-hydroxydecanoyl-[acyl-carrier-protein] dehydratase (Baumannia cicadellinicola subsp. Homalodisca coagulata).